A 685-amino-acid polypeptide reads, in one-letter code: N(6)-adenosine-methyltransferase MT-A70-like (685 aa).

Residues 464 to 465 (DI) and D482 each bind S-adenosyl-L-methionine. The tract at residues 552 to 565 (RIIRTGRTGHWLNH) is positively charged region required for RNA-binding. Residues K599, 622–625 (RMHN), and 635–636 (NQ) contribute to the S-adenosyl-L-methionine site. The disordered stretch occupies residues 657–685 (EIDVQPPSPPRASAMETDNEPMAIDSITA). S664 is subject to Phosphoserine.

It belongs to the MT-A70-like family. Interacts with FIP37. Interacts with MTB. Associates with MTB, FIP37, VIR and HAKAI to form the m6A writer complex which is essential for adenosine methylation at specific mRNA sequences.

Its subcellular location is the nucleus. The enzyme catalyses an adenosine in mRNA + S-adenosyl-L-methionine = an N(6)-methyladenosine in mRNA + S-adenosyl-L-homocysteine + H(+). Catalytic subunit of the N6-methyltransferase complex, a multiprotein complex that mediates N6-methyladenosine (m6A) methylation at the 5'-[AG]GAC-3' consensus sites of some mRNAs. Associates with MTB, FIP37, VIR and HAKAI to form the m6A writer complex which is essential for adenosine methylation at specific mRNA sequences. N6-methyladenosine (m6A) plays a role in mRNA stability, processing, translation efficiency and editing. The polypeptide is N(6)-adenosine-methyltransferase MT-A70-like (Arabidopsis thaliana (Mouse-ear cress)).